Here is a 449-residue protein sequence, read N- to C-terminus: tRNA-2-methylthio-N(6)-dimethylallyladenosine synthase (449 aa).

In terms of domain architecture, MTTase N-terminal spans 4–119; it reads RTFHIETFGC…APQALDRLVE (116 aa). [4Fe-4S] cluster is bound by residues Cys-13, Cys-48, Cys-82, Cys-158, Cys-162, and Cys-165. The Radical SAM core domain occupies 144-375; that stretch reads GAVPASVFVN…QTLQNRLTER (232 aa). Residues 378-446 form the TRAM domain; the sequence is QDMVGRKVEV…KHSLLAEQAG (69 aa).

Belongs to the methylthiotransferase family. MiaB subfamily. As to quaternary structure, monomer. The cofactor is [4Fe-4S] cluster.

The protein resides in the cytoplasm. It carries out the reaction N(6)-dimethylallyladenosine(37) in tRNA + (sulfur carrier)-SH + AH2 + 2 S-adenosyl-L-methionine = 2-methylsulfanyl-N(6)-dimethylallyladenosine(37) in tRNA + (sulfur carrier)-H + 5'-deoxyadenosine + L-methionine + A + S-adenosyl-L-homocysteine + 2 H(+). Catalyzes the methylthiolation of N6-(dimethylallyl)adenosine (i(6)A), leading to the formation of 2-methylthio-N6-(dimethylallyl)adenosine (ms(2)i(6)A) at position 37 in tRNAs that read codons beginning with uridine. In Nitratidesulfovibrio vulgaris (strain ATCC 29579 / DSM 644 / CCUG 34227 / NCIMB 8303 / VKM B-1760 / Hildenborough) (Desulfovibrio vulgaris), this protein is tRNA-2-methylthio-N(6)-dimethylallyladenosine synthase.